The chain runs to 314 residues: Putative peptide transport system permease protein BruAb2_1031 (314 aa).

Transmembrane regions (helical) follow at residues 12 to 32 (AIPV…LLPG), 101 to 121 (LALL…VVAA), 135 to 155 (LALL…VILF), 177 to 197 (WLRS…GYLA), 237 to 257 (VSVL…SVVI), and 286 to 306 (MLFL…LYTI). In terms of domain architecture, ABC transmembrane type-1 spans 95–304 (LPVTISLALL…AINVLVDILY (210 aa)).

The protein belongs to the binding-protein-dependent transport system permease family. The complex is composed of two ATP-binding proteins (BruAb2_1033 and BruAb2_1034), two transmembrane proteins (BruAb2_1031 and BruAb2_1032) and a solute-binding protein (BruAb2_1030).

The protein localises to the cell inner membrane. Probably part of an ABC transporter complex that could be involved in peptide import. Probably responsible for the translocation of the substrate across the membrane. The sequence is that of Putative peptide transport system permease protein BruAb2_1031 from Brucella abortus biovar 1 (strain 9-941).